The chain runs to 341 residues: Ferredoxin--NADP reductase 2 (341 aa).

FAD contacts are provided by D42, Q50, Y55, I95, F129, D294, and S335.

The protein belongs to the ferredoxin--NADP reductase type 2 family. As to quaternary structure, homodimer. FAD serves as cofactor.

The catalysed reaction is 2 reduced [2Fe-2S]-[ferredoxin] + NADP(+) + H(+) = 2 oxidized [2Fe-2S]-[ferredoxin] + NADPH. The chain is Ferredoxin--NADP reductase 2 from Chloroherpeton thalassium (strain ATCC 35110 / GB-78).